The following is a 622-amino-acid chain: Wall-associated receptor kinase-like 21 (622 aa).

A signal peptide spans 1-21; that stretch reads MAETPQPYLIFVFFVFTLTVA. Topologically, residues 22 to 247 are extracellular; that stretch reads TQTTGSVKCK…LVYKRKGLHK (226 aa). N-linked (GlcNAc...) asparagine glycans are attached at residues asparagine 50, asparagine 114, asparagine 131, asparagine 160, and asparagine 195. Residues 248–268 traverse the membrane as a helical segment; that stretch reads LVVLGTAGILVGVLVIVVLIA. At 269–622 the chain is on the cytoplasmic side; that stretch reads TYFFRNKQSA…MKRQQSFPRE (354 aa). A Protein kinase domain is found at 314–594; it reads FSDKNMLGTG…EITEDLHRIK (281 aa). ATP-binding positions include 320–328 and lysine 342; that span reads LGTGAYGTV. The active-site Proton acceptor is aspartate 439.

This sequence belongs to the protein kinase superfamily. Ser/Thr protein kinase family.

Its subcellular location is the membrane. It carries out the reaction L-seryl-[protein] + ATP = O-phospho-L-seryl-[protein] + ADP + H(+). The catalysed reaction is L-threonyl-[protein] + ATP = O-phospho-L-threonyl-[protein] + ADP + H(+). Its function is as follows. Serine/threonine-protein kinase that may function as a signaling receptor of extracellular matrix component. In Arabidopsis thaliana (Mouse-ear cress), this protein is Wall-associated receptor kinase-like 21 (WAKL21).